We begin with the raw amino-acid sequence, 785 residues long: DNA ligase (785 aa).

NAD(+) is bound by residues 32 to 36, 81 to 82, and E121; these read DAEYD and SL. K123 functions as the N6-AMP-lysine intermediate in the catalytic mechanism. 4 residues coordinate NAD(+): R144, E181, K294, and K318. 4 residues coordinate Zn(2+): C412, C415, C442, and C448. The region spanning 702–785 is the BRCT domain; the sequence is VEGLPEAGHT…AFLAKHNIPV (84 aa).

Belongs to the NAD-dependent DNA ligase family. LigA subfamily. Mg(2+) serves as cofactor. Requires Mn(2+) as cofactor.

The enzyme catalyses NAD(+) + (deoxyribonucleotide)n-3'-hydroxyl + 5'-phospho-(deoxyribonucleotide)m = (deoxyribonucleotide)n+m + AMP + beta-nicotinamide D-nucleotide.. Its function is as follows. DNA ligase that catalyzes the formation of phosphodiester linkages between 5'-phosphoryl and 3'-hydroxyl groups in double-stranded DNA using NAD as a coenzyme and as the energy source for the reaction. It is essential for DNA replication and repair of damaged DNA. This chain is DNA ligase, found in Pseudomonas fluorescens (strain SBW25).